The chain runs to 136 residues: 5-hydroxyisourate hydrolase (136 aa).

The signal sequence occupies residues 1-20 (MKRYILATVIASLVAAPAMA). 3 residues coordinate substrate: H31, R69, and Y133.

It belongs to the transthyretin family. 5-hydroxyisourate hydrolase subfamily. In terms of assembly, homotetramer.

The protein localises to the periplasm. The enzyme catalyses 5-hydroxyisourate + H2O = 5-hydroxy-2-oxo-4-ureido-2,5-dihydro-1H-imidazole-5-carboxylate + H(+). In terms of biological role, catalyzes the hydrolysis of 5-hydroxyisourate (HIU) to 2-oxo-4-hydroxy-4-carboxy-5-ureidoimidazoline (OHCU). This is 5-hydroxyisourate hydrolase (hiuH) from Salmonella typhimurium (strain LT2 / SGSC1412 / ATCC 700720).